Reading from the N-terminus, the 473-residue chain is Siroheme synthase 2 (473 aa).

The interval M1–V204 is precorrin-2 dehydrogenase /sirohydrochlorin ferrochelatase. NAD(+) contacts are provided by residues E22–I23 and C43–E44. S128 is subject to Phosphoserine. The tract at residues G216–G473 is uroporphyrinogen-III C-methyltransferase. Residue P225 participates in S-adenosyl-L-methionine binding. D248 serves as the catalytic Proton acceptor. K270 acts as the Proton donor in catalysis. Residues G301–D303, I306, T331–A332, M382, and G411 contribute to the S-adenosyl-L-methionine site.

This sequence in the N-terminal section; belongs to the precorrin-2 dehydrogenase / sirohydrochlorin ferrochelatase family. The protein in the C-terminal section; belongs to the precorrin methyltransferase family.

The enzyme catalyses uroporphyrinogen III + 2 S-adenosyl-L-methionine = precorrin-2 + 2 S-adenosyl-L-homocysteine + H(+). The catalysed reaction is precorrin-2 + NAD(+) = sirohydrochlorin + NADH + 2 H(+). It catalyses the reaction siroheme + 2 H(+) = sirohydrochlorin + Fe(2+). Its pathway is cofactor biosynthesis; adenosylcobalamin biosynthesis; precorrin-2 from uroporphyrinogen III: step 1/1. It participates in cofactor biosynthesis; adenosylcobalamin biosynthesis; sirohydrochlorin from precorrin-2: step 1/1. It functions in the pathway porphyrin-containing compound metabolism; siroheme biosynthesis; precorrin-2 from uroporphyrinogen III: step 1/1. The protein operates within porphyrin-containing compound metabolism; siroheme biosynthesis; siroheme from sirohydrochlorin: step 1/1. Its pathway is porphyrin-containing compound metabolism; siroheme biosynthesis; sirohydrochlorin from precorrin-2: step 1/1. In terms of biological role, multifunctional enzyme that catalyzes the SAM-dependent methylations of uroporphyrinogen III at position C-2 and C-7 to form precorrin-2 via precorrin-1. Then it catalyzes the NAD-dependent ring dehydrogenation of precorrin-2 to yield sirohydrochlorin. Finally, it catalyzes the ferrochelation of sirohydrochlorin to yield siroheme. This is Siroheme synthase 2 from Yersinia pseudotuberculosis serotype O:1b (strain IP 31758).